We begin with the raw amino-acid sequence, 186 residues long: Serine hydrolase RBBP9 (186 aa).

The interval 63–67 (LHCDE) is involved in binding to RB1. Residues S75, D138, and H165 each act as charge relay system in the active site.

It belongs to the RBBP9 family. In terms of assembly, interacts with RB1; the interaction disrupts RB1 binding to E2F1. Interacts with RBL1 and RBL2. As to expression, expressed at higher levels in tumor tissues such as carcinoma.

It carries out the reaction valacyclovir + H2O = acyclovir + L-valine + H(+). Inhibited by the natural product emetine produced by the ipecac root. Serine hydrolase. Catalyzes the hydrolytic activation of amino acid ester of the antiviral prodrug valacyclovir to its corresponding active drug, acyclovir. May negatively regulate basal or autocrine TGF-beta signaling by suppressing SMAD2-SMAD3 phosphorylation. May play a role in the transformation process due to its capacity to confer resistance to the growth-inhibitory effects of TGF-beta through interaction with RB1 and the subsequent displacement of E2F1. The protein is Serine hydrolase RBBP9 of Homo sapiens (Human).